The following is a 208-amino-acid chain: FMN-dependent NADH:quinone oxidoreductase 3 (208 aa).

The protein belongs to the azoreductase type 1 family. Homodimer. The cofactor is FMN.

It catalyses the reaction 2 a quinone + NADH + H(+) = 2 a 1,4-benzosemiquinone + NAD(+). It carries out the reaction N,N-dimethyl-1,4-phenylenediamine + anthranilate + 2 NAD(+) = 2-(4-dimethylaminophenyl)diazenylbenzoate + 2 NADH + 2 H(+). Quinone reductase that provides resistance to thiol-specific stress caused by electrophilic quinones. Its function is as follows. Also exhibits azoreductase activity. Catalyzes the reductive cleavage of the azo bond in aromatic azo compounds to the corresponding amines. This is FMN-dependent NADH:quinone oxidoreductase 3 from Bacillus cereus (strain ATCC 14579 / DSM 31 / CCUG 7414 / JCM 2152 / NBRC 15305 / NCIMB 9373 / NCTC 2599 / NRRL B-3711).